Here is a 183-residue protein sequence, read N- to C-terminus: Peptidyl-prolyl cis-trans isomerase 11 (183 aa).

Positions 20 to 182 (FLEVTAGGAP…LPIVVVQCGQ (163 aa)) constitute a PPIase cyclophilin-type domain.

Belongs to the cyclophilin-type PPIase family. PPIase H subfamily.

It catalyses the reaction [protein]-peptidylproline (omega=180) = [protein]-peptidylproline (omega=0). Its function is as follows. PPIases accelerate the folding of proteins. It catalyzes the cis-trans isomerization of proline imidic peptide bonds in oligopeptides. The polypeptide is Peptidyl-prolyl cis-trans isomerase 11 (cyn-11) (Caenorhabditis elegans).